The primary structure comprises 372 residues: MAPSELNCTHQNQHSSGYDGPRSRVTVVGSGNWGSVAAKLIATNTLKLPSFHDEVRMWVFEETLPSGEKLTDVINQTNENVKYLPGIKLGRNVVADPDLENAVKDANMLVFVTPHQFMEGICKRLEGKIQEGAQALSLIKGMEVKMEGPCMISSLISDLLGINCCVLMGANIANEIAVEKFSEATVGFRENRDIAEKWVQLFSTPYFMVSAVEDVEGVELCGTLKNIVAIAAGFVDGLEMGNNTKAAIMRIGLREMKAFSKLLFPSVKDTTFFESCGVADLITTCLGGRNRKVAEAFAKNGGKRSFDDLEAEMLRGQKLQGVSTAKEVYEVLGHRGWLELFPLFSTVHEISTGRLPPSAIVEYSEQKTIFSW.

Positions 1–16 (MAPSELNCTHQNQHSS) are enriched in polar residues. The disordered stretch occupies residues 1 to 23 (MAPSELNCTHQNQHSSGYDGPRS). Residues 29-34 (GSGNWG), phenylalanine 60, phenylalanine 117, lysine 140, and alanine 173 contribute to the NAD(+) site. Lysine 140 lines the substrate pocket. Lysine 225 (proton acceptor) is an active-site residue. NAD(+)-binding residues include arginine 289, lysine 318, and glutamine 320. 289-290 (RN) provides a ligand contact to substrate.

Belongs to the NAD-dependent glycerol-3-phosphate dehydrogenase family.

The enzyme catalyses sn-glycerol 3-phosphate + NAD(+) = dihydroxyacetone phosphate + NADH + H(+). This chain is Glycerol-3-phosphate dehydrogenase [NAD(+)] (GPDH), found in Cuphea lanceolata (Cigar flower).